We begin with the raw amino-acid sequence, 312 residues long: tRNA pseudouridine synthase B (312 aa).

Asp37 serves as the catalytic Nucleophile.

The protein belongs to the pseudouridine synthase TruB family. Type 1 subfamily.

The enzyme catalyses uridine(55) in tRNA = pseudouridine(55) in tRNA. Functionally, responsible for synthesis of pseudouridine from uracil-55 in the psi GC loop of transfer RNAs. In Thermus thermophilus (strain ATCC BAA-163 / DSM 7039 / HB27), this protein is tRNA pseudouridine synthase B.